The following is a 181-amino-acid chain: tRNA-splicing endonuclease (181 aa).

Residues Tyr118, His126, and Lys157 contribute to the active site.

This sequence belongs to the tRNA-intron endonuclease family. Archaeal short subfamily. In terms of assembly, homotetramer; although the tetramer contains four active sites, only two participate in the cleavage. Therefore, it should be considered as a dimer of dimers.

The catalysed reaction is pretRNA = a 3'-half-tRNA molecule with a 5'-OH end + a 5'-half-tRNA molecule with a 2',3'-cyclic phosphate end + an intron with a 2',3'-cyclic phosphate and a 5'-hydroxyl terminus.. Endonuclease that removes tRNA introns. Cleaves pre-tRNA at the 5'- and 3'-splice sites to release the intron. The products are an intron and two tRNA half-molecules bearing 2',3' cyclic phosphate and 5'-OH termini. Recognizes a pseudosymmetric substrate in which 2 bulged loops of 3 bases are separated by a stem of 4 bp. This Sulfolobus acidocaldarius (strain ATCC 33909 / DSM 639 / JCM 8929 / NBRC 15157 / NCIMB 11770) protein is tRNA-splicing endonuclease.